Here is a 275-residue protein sequence, read N- to C-terminus: Exosome complex component Rrp42 (275 aa).

This sequence belongs to the RNase PH family. Rrp42 subfamily. In terms of assembly, component of the archaeal exosome complex. Forms a hexameric ring-like arrangement composed of 3 Rrp41-Rrp42 heterodimers. The hexameric ring associates with a trimer of Rrp4 and/or Csl4 subunits.

Its subcellular location is the cytoplasm. Its function is as follows. Non-catalytic component of the exosome, which is a complex involved in RNA degradation. Contributes to the structuring of the Rrp41 active site. This is Exosome complex component Rrp42 from Saccharolobus solfataricus (strain ATCC 35092 / DSM 1617 / JCM 11322 / P2) (Sulfolobus solfataricus).